A 208-amino-acid chain; its full sequence is Probable GTP-binding protein EngB (208 aa).

An EngB-type G domain is found at Leu23–Thr205. Residues Gly31 to Ser38, Gly57 to Leu61, Asp84 to Gly87, Thr154 to Asp157, and Phe182 to Ala184 each bind GTP. Positions 38 and 59 each coordinate Mg(2+).

Belongs to the TRAFAC class TrmE-Era-EngA-EngB-Septin-like GTPase superfamily. EngB GTPase family. Requires Mg(2+) as cofactor.

Functionally, necessary for normal cell division and for the maintenance of normal septation. In Helicobacter pylori (strain P12), this protein is Probable GTP-binding protein EngB.